The primary structure comprises 212 residues: Penicillin-binding protein activator LpoB (212 aa).

Positions 1-19 (MTKMHRYAAIAALAIFLSG) are cleaved as a signal peptide. Residue Cys-20 is the site of N-palmitoyl cysteine attachment. Cys-20 carries the S-diacylglycerol cysteine lipid modification. A disordered region spans residues 28 to 73 (PVEEVKPAPEQPAQPPQPPVVPSVPTIPQQPGPIEHEDQTGQPAPK). Pro residues predominate over residues 36–49 (PEQPAQPPQPPVVP).

The protein belongs to the LpoB family. Interacts with PBP1b.

It is found in the cell outer membrane. Its function is as follows. Regulator of peptidoglycan synthesis that is essential for the function of penicillin-binding protein 1B (PBP1b). The polypeptide is Penicillin-binding protein activator LpoB (Salmonella typhimurium (strain LT2 / SGSC1412 / ATCC 700720)).